The primary structure comprises 354 residues: Chorismate synthase (354 aa).

Arginine 48 contacts NADP(+). FMN is bound by residues arginine 125 to serine 127, alanine 280, lysine 295 to serine 299, and arginine 321.

It belongs to the chorismate synthase family. In terms of assembly, homotetramer. FMNH2 serves as cofactor.

The enzyme catalyses 5-O-(1-carboxyvinyl)-3-phosphoshikimate = chorismate + phosphate. It functions in the pathway metabolic intermediate biosynthesis; chorismate biosynthesis; chorismate from D-erythrose 4-phosphate and phosphoenolpyruvate: step 7/7. Its function is as follows. Catalyzes the anti-1,4-elimination of the C-3 phosphate and the C-6 proR hydrogen from 5-enolpyruvylshikimate-3-phosphate (EPSP) to yield chorismate, which is the branch point compound that serves as the starting substrate for the three terminal pathways of aromatic amino acid biosynthesis. This reaction introduces a second double bond into the aromatic ring system. The sequence is that of Chorismate synthase from Syntrophus aciditrophicus (strain SB).